The primary structure comprises 68 residues: Large ribosomal subunit protein bL31 (68 aa).

Zn(2+)-binding residues include Cys-16, Cys-18, Cys-36, and Cys-39.

Belongs to the bacterial ribosomal protein bL31 family. Type A subfamily. In terms of assembly, part of the 50S ribosomal subunit. Requires Zn(2+) as cofactor.

Its function is as follows. Binds the 23S rRNA. The chain is Large ribosomal subunit protein bL31 from Dictyoglomus turgidum (strain DSM 6724 / Z-1310).